The sequence spans 189 residues: MTEIRRETKETKIEVKLEINGSGKSNISTGVGFFDHMLEALAKHSGMDLEVFCDGDIYVDYHHTVEDVGIVLGEALFNEVYPVQNIERYANAVAILDEAAVEVDLDIGGRPYLVYDLPREGMIKDFDMELVEEFFKSLVFNFKIAAHIIYKRGTNKHHIVESAFKSFAVALRRALSYRESGIPSTKGII.

This sequence belongs to the imidazoleglycerol-phosphate dehydratase family.

It localises to the cytoplasm. It carries out the reaction D-erythro-1-(imidazol-4-yl)glycerol 3-phosphate = 3-(imidazol-4-yl)-2-oxopropyl phosphate + H2O. It functions in the pathway amino-acid biosynthesis; L-histidine biosynthesis; L-histidine from 5-phospho-alpha-D-ribose 1-diphosphate: step 6/9. The chain is Imidazoleglycerol-phosphate dehydratase from Nautilia profundicola (strain ATCC BAA-1463 / DSM 18972 / AmH).